The chain runs to 708 residues: B-cell lymphoma 6 protein homolog (708 aa).

A BTB domain is found at 32–99; sequence TDVVIIVNRE…MYTSRLNLRE (68 aa). Positions 303–317 are enriched in basic and acidic residues; the sequence is AKEEERTSSEDEISQ. Disordered regions lie at residues 303–371 and 431–470; these read AKEE…KSPT and PTKM…QSPL. 2 stretches are compositionally biased toward polar residues: residues 333-370 and 431-454; these read SPQS…TKSP and PTKM…NIVN. 6 consecutive C2H2-type zinc fingers follow at residues 520-543, 548-570, 576-598, 604-626, 632-654, and 660-683; these read FFCN…LQVH, YKCD…KTVH, YRCN…TRIH, YKCE…VLIH, YPCE…LRIH, and YHCE…RQKH.

It localises to the nucleus. Functionally, transcriptional repressor mainly required for germinal center (GC) formation and antibody affinity maturation which has different mechanisms of action specific to the lineage and biological functions. Forms complexes with different corepressors and histone deacetylases to repress the transcriptional expression of different subsets of target genes. Represses its target genes by binding directly to the DNA sequence 5'-TTCCTAGAA-3' (BCL6-binding site) or indirectly by repressing the transcriptional activity of transcription factors. In GC B-cells, represses genes that function in differentiation, inflammation, apoptosis and cell cycle control, also autoregulates its transcriptional expression and up-regulates, indirectly, the expression of some genes important for GC reactions, such as AICDA, through the repression of microRNAs expression. An important function is to allow GC B-cells to proliferate very rapidly in response to T-cell dependent antigens and tolerate the physiological DNA breaks required for immunglobulin class switch recombination and somatic hypermutation without inducing a p53/TP53-dependent apoptotic response. In follicular helper CD4(+) T-cells (T(FH) cells), promotes the expression of T(FH)-related genes but inhibits the differentiation of T(H)1, T(H)2 and T(H)17 cells. Also required for the establishment and maintenance of immunological memory for both T- and B-cells. Suppresses macrophage proliferation through competition with STAT5 for STAT-binding motifs binding on certain target genes, such as CCL2 and CCND2. In response to genotoxic stress, controls cell cycle arrest in GC B-cells in both p53/TP53-dependedent and -independent manners. Besides, also controls neurogenesis through the alteration of the composition of NOTCH-dependent transcriptional complexes at selective NOTCH targets, such as HES5, including the recruitment of the deacetylase SIRT1 and resulting in an epigenetic silencing leading to neuronal differentiation. In Gallus gallus (Chicken), this protein is B-cell lymphoma 6 protein homolog.